Consider the following 475-residue polypeptide: 3-isopropylmalate dehydratase large subunit (475 aa).

Residues cysteine 349, cysteine 409, and cysteine 412 each coordinate [4Fe-4S] cluster.

Belongs to the aconitase/IPM isomerase family. LeuC type 1 subfamily. Heterodimer of LeuC and LeuD. Requires [4Fe-4S] cluster as cofactor.

The enzyme catalyses (2R,3S)-3-isopropylmalate = (2S)-2-isopropylmalate. It participates in amino-acid biosynthesis; L-leucine biosynthesis; L-leucine from 3-methyl-2-oxobutanoate: step 2/4. In terms of biological role, catalyzes the isomerization between 2-isopropylmalate and 3-isopropylmalate, via the formation of 2-isopropylmaleate. This Cereibacter sphaeroides (strain KD131 / KCTC 12085) (Rhodobacter sphaeroides) protein is 3-isopropylmalate dehydratase large subunit.